We begin with the raw amino-acid sequence, 338 residues long: Tryptophan--tRNA ligase (338 aa).

ATP is bound by residues 12–14 (QPT) and 20–21 (GN). Residues 13 to 21 (PTGDLHIGN) carry the 'HIGH' region motif. Asp136 serves as a coordination point for L-tryptophan. Residues 148–150 (GED), Ile191, and 200–204 (KMSKS) each bind ATP. Positions 200-204 (KMSKS) match the 'KMSKS' region motif.

The protein belongs to the class-I aminoacyl-tRNA synthetase family. As to quaternary structure, homodimer.

The protein resides in the cytoplasm. It carries out the reaction tRNA(Trp) + L-tryptophan + ATP = L-tryptophyl-tRNA(Trp) + AMP + diphosphate + H(+). Its function is as follows. Catalyzes the attachment of tryptophan to tRNA(Trp). The polypeptide is Tryptophan--tRNA ligase (Prochlorococcus marinus subsp. pastoris (strain CCMP1986 / NIES-2087 / MED4)).